We begin with the raw amino-acid sequence, 407 residues long: Peptidase T (407 aa).

Position 81 (H81) interacts with Zn(2+). D83 is an active-site residue. D142 provides a ligand contact to Zn(2+). Residue E176 is the Proton acceptor of the active site. The Zn(2+) site is built by E177, D199, and H381.

It belongs to the peptidase M20B family. Zn(2+) is required as a cofactor.

It localises to the cytoplasm. The catalysed reaction is Release of the N-terminal residue from a tripeptide.. In terms of biological role, cleaves the N-terminal amino acid of tripeptides. In Streptococcus pneumoniae (strain ATCC 700669 / Spain 23F-1), this protein is Peptidase T.